The primary structure comprises 972 residues: FHF complex subunit HOOK-interacting protein 1B (972 aa).

Disordered stretches follow at residues 465–548 (APSP…GELE) and 573–644 (SAPY…SWPE). Position 467 is a phosphoserine (serine 467). Over residues 478–501 (RGPGSPSVDSSSVTTVPRPSTPSR) the composition is skewed to low complexity. Phosphoserine is present on residues serine 510, serine 523, serine 529, and serine 533. Positions 523-535 (SPGLSASPASSPG) are enriched in low complexity. Serine 859 and serine 897 each carry phosphoserine.

The protein belongs to the FHIP family. As to quaternary structure, component of the FTS/Hook/FHIP complex (FHF complex), composed of AKTIP/FTS, FHIP1B, and one or more members of the Hook family of proteins HOOK1, HOOK2, and HOOK3. The FHF complex associates with the homotypic vesicular sorting complex (the HOPS complex).

Functionally, component of the FTS/Hook/FHIP complex (FHF complex). The FHF complex may function to promote vesicle trafficking and/or fusion via the homotypic vesicular protein sorting complex (the HOPS complex). FHF complex promotes the distribution of AP-4 complex to the perinuclear area of the cell. In Homo sapiens (Human), this protein is FHF complex subunit HOOK-interacting protein 1B.